Reading from the N-terminus, the 64-residue chain is Putative antitoxin VapB1 (64 aa).

In terms of biological role, possibly the antitoxin component of a type II toxin-antitoxin (TA) system. Its cognate toxin is VapC1 (Potential). The sequence is that of Putative antitoxin VapB1 (vapB1) from Methanocaldococcus jannaschii (strain ATCC 43067 / DSM 2661 / JAL-1 / JCM 10045 / NBRC 100440) (Methanococcus jannaschii).